Here is a 264-residue protein sequence, read N- to C-terminus: Endochitinase At2g43590 (264 aa).

The signal sequence occupies residues 1 to 24; the sequence is MAFTKISLVLLLCLLGFFSETVKS. The Chitin-binding type-1 domain maps to 25 to 59; that stretch reads QNCGCAPNLCCSQFGYCGTDDAYCGVGCRSGPCRG. 4 disulfide bridges follow: cysteine 27/cysteine 35, cysteine 29/cysteine 41, cysteine 34/cysteine 48, and cysteine 52/cysteine 57. Residues 66 to 264 form a catalytic region; the sequence is GSVGSIVTQG…GVDPGPNLSC (199 aa). Glutamate 128 serves as the catalytic Proton donor. N-linked (GlcNAc...) asparagine glycosylation is present at asparagine 261.

The protein belongs to the glycosyl hydrolase 19 family. Chitinase class I subfamily.

The catalysed reaction is Random endo-hydrolysis of N-acetyl-beta-D-glucosaminide (1-&gt;4)-beta-linkages in chitin and chitodextrins.. In Arabidopsis thaliana (Mouse-ear cress), this protein is Endochitinase At2g43590.